A 375-amino-acid chain; its full sequence is MNLNFKLNLKEIERYDLVILLMAVALTCFGVVMVYSASSVMATKKFHDGFYFLKRQGIYAILGCAAMIVAMRIDYRQWREYAVPILLGCLLLLLLVFIPGIGGAAKGASRWIRFPGFNLQPSELAKIALIMYMAYSLDKKQEKVKFFSTGFAPYMVLLAILLAILLKQHDLGSALTMGGVAILMLFAAGTRPRYILGMVVLTLPFLYFLVMNVDYRRRRILAYLNPWEDPTNTGFQIIQSWLAFGNGGIIGQGLGEGKQKMFFLPEAHTDFILSVVGEELGLIGVIVIAAMFLMLVLRGVRVALMAQDPFGRFLAFGIVTLLGIQAFVNMGVVTGLLPTKGLALPFISYGGSSLIVTLFAVGILLNVSTRMKGTP.

The Cytoplasmic segment spans residues Met1–Asp16. Residues Leu17 to Ala37 traverse the membrane as a helical segment. Residues Ser38–Gly49 are Periplasmic-facing. A helical membrane pass occupies residues Phe50 to Ala70. Over Met71–Tyr81 the chain is Cytoplasmic. Residues Ala82–Gly102 traverse the membrane as a helical segment. Over Gly103 to Lys145 the chain is Periplasmic. The chain crosses the membrane as a helical span at residues Phe146–Leu166. Residues Lys167 to His169 are Cytoplasmic-facing. Residues Asp170–Thr190 traverse the membrane as a helical segment. The Periplasmic portion of the chain corresponds to Arg191 to Arg193. Residues Tyr194–Asp214 form a helical membrane-spanning segment. The Cytoplasmic segment spans residues Tyr215 to Thr233. Residues Gly234–Leu254 form a helical membrane-spanning segment. Residues Gly255–Glu279 lie on the Periplasmic side of the membrane. Residues Leu280–Val300 form a helical membrane-spanning segment. The Cytoplasmic portion of the chain corresponds to Arg301–Arg312. A helical transmembrane segment spans residues Phe313–Val333. Topologically, residues Thr334–Ala343 are periplasmic. The chain crosses the membrane as a helical span at residues Leu344–Leu364. The Cytoplasmic portion of the chain corresponds to Leu365–Pro375.

Belongs to the SEDS family. FtsW subfamily.

The protein resides in the cell inner membrane. The enzyme catalyses [GlcNAc-(1-&gt;4)-Mur2Ac(oyl-L-Ala-gamma-D-Glu-L-Lys-D-Ala-D-Ala)](n)-di-trans,octa-cis-undecaprenyl diphosphate + beta-D-GlcNAc-(1-&gt;4)-Mur2Ac(oyl-L-Ala-gamma-D-Glu-L-Lys-D-Ala-D-Ala)-di-trans,octa-cis-undecaprenyl diphosphate = [GlcNAc-(1-&gt;4)-Mur2Ac(oyl-L-Ala-gamma-D-Glu-L-Lys-D-Ala-D-Ala)](n+1)-di-trans,octa-cis-undecaprenyl diphosphate + di-trans,octa-cis-undecaprenyl diphosphate + H(+). The protein operates within cell wall biogenesis; peptidoglycan biosynthesis. Peptidoglycan polymerase that is essential for cell division. In Geobacter metallireducens (strain ATCC 53774 / DSM 7210 / GS-15), this protein is Probable peptidoglycan glycosyltransferase FtsW.